The sequence spans 344 residues: Uroporphyrinogen decarboxylase (344 aa).

Substrate-binding positions include 29 to 33 (RQAGR), Asp79, Tyr153, Ser208, and His324.

Belongs to the uroporphyrinogen decarboxylase family. Homodimer.

It localises to the cytoplasm. It catalyses the reaction uroporphyrinogen III + 4 H(+) = coproporphyrinogen III + 4 CO2. The protein operates within porphyrin-containing compound metabolism; protoporphyrin-IX biosynthesis; coproporphyrinogen-III from 5-aminolevulinate: step 4/4. Its function is as follows. Catalyzes the decarboxylation of four acetate groups of uroporphyrinogen-III to yield coproporphyrinogen-III. The sequence is that of Uroporphyrinogen decarboxylase from Rhizorhabdus wittichii (strain DSM 6014 / CCUG 31198 / JCM 15750 / NBRC 105917 / EY 4224 / RW1) (Sphingomonas wittichii).